Here is a 195-residue protein sequence, read N- to C-terminus: Pyridoxal 5'-phosphate synthase subunit PdxT (195 aa).

46–48 (GES) contributes to the L-glutamine binding site. The active-site Nucleophile is the C78. Residues R107 and 136–137 (IR) contribute to the L-glutamine site. Catalysis depends on charge relay system residues H173 and E175.

The protein belongs to the glutaminase PdxT/SNO family. As to quaternary structure, in the presence of PdxS, forms a dodecamer of heterodimers. Only shows activity in the heterodimer.

It carries out the reaction aldehydo-D-ribose 5-phosphate + D-glyceraldehyde 3-phosphate + L-glutamine = pyridoxal 5'-phosphate + L-glutamate + phosphate + 3 H2O + H(+). The enzyme catalyses L-glutamine + H2O = L-glutamate + NH4(+). The protein operates within cofactor biosynthesis; pyridoxal 5'-phosphate biosynthesis. Its function is as follows. Catalyzes the hydrolysis of glutamine to glutamate and ammonia as part of the biosynthesis of pyridoxal 5'-phosphate. The resulting ammonia molecule is channeled to the active site of PdxS. This Dehalococcoides mccartyi (strain CBDB1) protein is Pyridoxal 5'-phosphate synthase subunit PdxT.